The sequence spans 250 residues: 5'/3'-nucleotidase SurE (250 aa).

A divalent metal cation-binding residues include Asp-8, Asp-9, Ser-39, and Asn-92.

It belongs to the SurE nucleotidase family. The cofactor is a divalent metal cation.

The protein resides in the cytoplasm. The catalysed reaction is a ribonucleoside 5'-phosphate + H2O = a ribonucleoside + phosphate. The enzyme catalyses a ribonucleoside 3'-phosphate + H2O = a ribonucleoside + phosphate. It catalyses the reaction [phosphate](n) + H2O = [phosphate](n-1) + phosphate + H(+). Its function is as follows. Nucleotidase with a broad substrate specificity as it can dephosphorylate various ribo- and deoxyribonucleoside 5'-monophosphates and ribonucleoside 3'-monophosphates with highest affinity to 3'-AMP. Also hydrolyzes polyphosphate (exopolyphosphatase activity) with the preference for short-chain-length substrates (P20-25). Might be involved in the regulation of dNTP and NTP pools, and in the turnover of 3'-mononucleotides produced by numerous intracellular RNases (T1, T2, and F) during the degradation of various RNAs. The chain is 5'/3'-nucleotidase SurE from Wigglesworthia glossinidia brevipalpis.